We begin with the raw amino-acid sequence, 173 residues long: Mitochondrial import inner membrane translocase subunit TIM22-1 (173 aa).

The N-terminal 18 residues, 1 to 18, are a transit peptide targeting the mitochondrion; that stretch reads MADSSAAEPTTGASSPPV. The disordered stretch occupies residues 1–26; it reads MADSSAAEPTTGASSPPVASDENSTQ. 4 consecutive transmembrane segments (helical) span residues 52–72, 101–119, 128–144, and 151–168; these read VTSG…LGAL, SCKT…ECIV, TVNT…SMSA, and ACIG…IEKF.

The protein belongs to the Tim17/Tim22/Tim23 family. As to expression, expressed in young cotyledons, roots, flowers and leaves.

Its subcellular location is the mitochondrion inner membrane. Its function is as follows. Essential core component of the TIM22 complex, a complex that mediates the import and insertion of multi-pass transmembrane proteins into the mitochondrial inner membrane. The protein is Mitochondrial import inner membrane translocase subunit TIM22-1 (TIM22-1) of Arabidopsis thaliana (Mouse-ear cress).